A 160-amino-acid polypeptide reads, in one-letter code: UPF0260 protein Rleg2_0895 (160 aa).

The protein belongs to the UPF0260 family.

This is UPF0260 protein Rleg2_0895 from Rhizobium leguminosarum bv. trifolii (strain WSM2304).